We begin with the raw amino-acid sequence, 394 residues long: Alpha-2B adrenergic receptor (394 aa).

A helical membrane pass occupies residues 1–25 (AIAAVITFLILFTIFGNALVILAVL). At 26-36 (TSRSLRAPQNL) the chain is on the cytoplasmic side. The chain crosses the membrane as a helical span at residues 37–62 (FLVSLAAADILVATLIIPFSLANELL). Over 63–72 (GYWYFRRTWC) the chain is Extracellular. Cysteine 72 and cysteine 151 are oxidised to a cystine. Residues 73 to 95 (EVYLALDVLFCTSSIVHLCAISL) traverse the membrane as a helical segment. The Cytoplasmic segment spans residues 96-117 (DRYWAVSRALEYNCKRTPRRIK). A helical membrane pass occupies residues 118–140 (CIILTVWLIAAAISLPPLIYKGD). Residues 141 to 156 (QGPQPHGAPQCKLNQE) lie on the Extracellular side of the membrane. Residues 157-180 (AWYILSSSLGSFFVPCLIMILVYL) form a helical membrane-spanning segment. Over 181–358 (RIYLIAKRSH…LSREKRFTFV (178 aa)) the chain is Cytoplasmic. Residues 191–318 (RRGPRAKGGP…GSPPLQQPQG (128 aa)) form a disordered region. Residues 281–298 (LEEEAEEEEEEEEEEDEP) are compositionally biased toward acidic residues. Residues 299 to 312 (QAVPVSPASVGSPP) show a composition bias toward low complexity. A helical transmembrane segment spans residues 359–382 (LAVVIGVFVLCWFPFFFSYSLSAI). The Extracellular portion of the chain corresponds to 383 to 391 (CPQQCRVPH). Residues 392 to 394 (GLF) traverse the membrane as a helical segment.

The protein belongs to the G-protein coupled receptor 1 family. Adrenergic receptor subfamily. ADRA2B sub-subfamily. Interacts with RAB26. Interacts with PPP1R9B. Interacts with GGA1, GGA2 and GGA3.

The protein localises to the cell membrane. In terms of biological role, alpha-2 adrenergic receptors mediate the catecholamine-induced inhibition of adenylate cyclase through the action of G proteins. This Oryctolagus cuniculus (Rabbit) protein is Alpha-2B adrenergic receptor (ADRA2B).